The sequence spans 49 residues: Large ribosomal subunit protein eL40 (49 aa).

The protein belongs to the eukaryotic ribosomal protein eL40 family.

This chain is Large ribosomal subunit protein eL40, found in Methanococcoides burtonii (strain DSM 6242 / NBRC 107633 / OCM 468 / ACE-M).